The following is a 458-amino-acid chain: UDP-N-acetylmuramoylalanine--D-glutamate ligase (458 aa).

124-130 (GSDGKTT) serves as a coordination point for ATP.

The protein belongs to the MurCDEF family.

Its subcellular location is the cytoplasm. It carries out the reaction UDP-N-acetyl-alpha-D-muramoyl-L-alanine + D-glutamate + ATP = UDP-N-acetyl-alpha-D-muramoyl-L-alanyl-D-glutamate + ADP + phosphate + H(+). It functions in the pathway cell wall biogenesis; peptidoglycan biosynthesis. Cell wall formation. Catalyzes the addition of glutamate to the nucleotide precursor UDP-N-acetylmuramoyl-L-alanine (UMA). This chain is UDP-N-acetylmuramoylalanine--D-glutamate ligase, found in Clostridium botulinum (strain Langeland / NCTC 10281 / Type F).